The sequence spans 397 residues: Elongation factor Tu (397 aa).

In terms of domain architecture, tr-type G spans Lys-10–Val-207. The tract at residues Gly-19–Thr-26 is G1. Gly-19–Thr-26 serves as a coordination point for GTP. Position 26 (Thr-26) interacts with Mg(2+). The tract at residues Gly-63 to Asn-67 is G2. The G3 stretch occupies residues Asp-84 to Gly-87. GTP contacts are provided by residues Asp-84–His-88 and Asn-139–Asp-142. The interval Asn-139–Asp-142 is G4. Residues Ser-177–Leu-179 form a G5 region.

This sequence belongs to the TRAFAC class translation factor GTPase superfamily. Classic translation factor GTPase family. EF-Tu/EF-1A subfamily. In terms of assembly, monomer.

It localises to the cytoplasm. It catalyses the reaction GTP + H2O = GDP + phosphate + H(+). Functionally, GTP hydrolase that promotes the GTP-dependent binding of aminoacyl-tRNA to the A-site of ribosomes during protein biosynthesis. This chain is Elongation factor Tu, found in Tropheryma whipplei (strain Twist) (Whipple's bacillus).